The primary structure comprises 281 residues: Probable endonuclease 4 (281 aa).

His69, His109, Glu145, Asp179, His182, His216, Asp229, His231, and Glu261 together coordinate Zn(2+).

It belongs to the AP endonuclease 2 family. Zn(2+) is required as a cofactor.

The enzyme catalyses Endonucleolytic cleavage to 5'-phosphooligonucleotide end-products.. Its function is as follows. Endonuclease IV plays a role in DNA repair. It cleaves phosphodiester bonds at apurinic or apyrimidinic (AP) sites, generating a 3'-hydroxyl group and a 5'-terminal sugar phosphate. This is Probable endonuclease 4 from Parabacteroides distasonis (strain ATCC 8503 / DSM 20701 / CIP 104284 / JCM 5825 / NCTC 11152).